A 354-amino-acid polypeptide reads, in one-letter code: DNA polymerase IV (354 aa).

One can recognise a UmuC domain in the interval 8–189 (IIHIDMDCFY…LPLQKIPGVG (182 aa)). Positions 12 and 107 each coordinate Mg(2+). E108 is a catalytic residue.

It belongs to the DNA polymerase type-Y family. Monomer. It depends on Mg(2+) as a cofactor.

It localises to the cytoplasm. The enzyme catalyses DNA(n) + a 2'-deoxyribonucleoside 5'-triphosphate = DNA(n+1) + diphosphate. In terms of biological role, poorly processive, error-prone DNA polymerase involved in untargeted mutagenesis. Copies undamaged DNA at stalled replication forks, which arise in vivo from mismatched or misaligned primer ends. These misaligned primers can be extended by PolIV. Exhibits no 3'-5' exonuclease (proofreading) activity. May be involved in translesional synthesis, in conjunction with the beta clamp from PolIII. This is DNA polymerase IV from Vibrio vulnificus (strain CMCP6).